The following is a 156-amino-acid chain: Large ribosomal subunit protein uL22 (156 aa).

This sequence belongs to the universal ribosomal protein uL22 family. In terms of assembly, part of the 50S ribosomal subunit.

In terms of biological role, this protein binds specifically to 23S rRNA. It makes multiple contacts with different domains of the 23S rRNA in the assembled 50S subunit and ribosome. Functionally, the globular domain of the protein is located near the polypeptide exit tunnel on the outside of the subunit, while an extended beta-hairpin is found that lines the wall of the exit tunnel in the center of the 70S ribosome. This chain is Large ribosomal subunit protein uL22, found in Sulfolobus acidocaldarius (strain ATCC 33909 / DSM 639 / JCM 8929 / NBRC 15157 / NCIMB 11770).